Reading from the N-terminus, the 272-residue chain is uncharacterized protein (272 aa).

This is an uncharacterized protein from Archaeoglobus fulgidus (strain ATCC 49558 / DSM 4304 / JCM 9628 / NBRC 100126 / VC-16).